The primary structure comprises 514 residues: WD repeat-containing protein 26 (514 aa).

The CTLH domain maps to 9-84 (EHPSATKFRN…EYLEDGKVLE (76 aa)). WD repeat units follow at residues 206 to 245 (EHCN…HLLK), 252 to 291 (GHAY…GELR), 297 to 337 (SHED…DSWE), 377 to 416 (QEDH…LVRK), 419 to 461 (GVTQ…PIAE), and 464 to 504 (GHTR…DHQN).

Forms homooligomers. Identified in the CTLH complex that contains GID4, RANBP9 and/or RANBP10, MKLN1, MAEA, RMND5A (or alternatively its paralog RMND5B), GID8, ARMC8, WDR26 and YPEL5. Within this complex, MAEA, RMND5A (or alternatively its paralog RMND5B), GID8, WDR26, and RANBP9 and/or RANBP10 form the catalytic core, while GID4, MKLN1, ARMC8 and YPEL5 have ancillary roles. Interacts with DDB1-CUL4A/B E3 ligase complexes. Forms a complex composed of at least WDR26, a G-beta:gamma unit, and PLCB2. Interacts with AXIN1.

It localises to the cytoplasm. It is found in the nucleus. The protein localises to the mitochondrion. Its function is as follows. G-beta-like protein involved in cell signal transduction. Acts as a negative regulator in MAPK signaling pathway. Functions as a scaffolding protein to promote G beta:gamma-mediated PLCB2 plasma membrane translocation and subsequent activation in leukocytes. Core component of the CTLH E3 ubiquitin-protein ligase complex that selectively accepts ubiquitin from UBE2H and mediates ubiquitination and subsequent proteasomal degradation of the transcription factor HBP1. Acts as a negative regulator of the canonical Wnt signaling pathway through preventing ubiquitination of beta-catenin CTNNB1 by the beta-catenin destruction complex, thus negatively regulating CTNNB1 degradation. Protects cells from oxidative stress-induced apoptosis via the down-regulation of AP-1 transcriptional activity as well as by inhibiting cytochrome c release from mitochondria. Also protects cells by promoting hypoxia-mediated autophagy and mitophagy. The polypeptide is WD repeat-containing protein 26 (Wdr26) (Rattus norvegicus (Rat)).